We begin with the raw amino-acid sequence, 467 residues long: Signal transduction histidine-protein kinase BaeS (467 aa).

Residues 1-11 lie on the Cytoplasmic side of the membrane; the sequence is MKFWRPGITGK. The chain crosses the membrane as a helical span at residues 12-32; the sequence is LFLAIFATCIVLLISMHWAVR. Residues 33–167 are Periplasmic-facing; the sequence is ISFERGFIDY…NFDKQQRQTS (135 aa). A helical membrane pass occupies residues 168–186; sequence WLIVALATLLAALATFLLA. The 53-residue stretch at 187-239 folds into the HAMP domain; the sequence is RGLLAPVKRLVDGTHKLAAGDFTTRVTPTSEDELGKLAQDFNQLASTLEKNQQ. Residues 187–467 lie on the Cytoplasmic side of the membrane; it reads RGLLAPVKRL…PLERDLQREV (281 aa). The 215-residue stretch at 247–461 folds into the Histidine kinase domain; it reads DISHELRTPL…SITVELPLER (215 aa). H250 is subject to Phosphohistidine; by autocatalysis.

Autophosphorylated.

It is found in the cell inner membrane. The enzyme catalyses ATP + protein L-histidine = ADP + protein N-phospho-L-histidine.. Its function is as follows. Member of the two-component regulatory system BaeS/BaeR which responds to envelope stress. Activates expression of periplasmic chaperone spy in response to spheroplast formation, indole and P pili protein PapG overexpression. Activates BaeR by phosphorylation which then activates the mdtABCD and probably the CRISPR-Cas casABCDE-ygbT-ygbF operons. In Escherichia coli (strain K12), this protein is Signal transduction histidine-protein kinase BaeS.